The chain runs to 467 residues: Indoleacetamide hydrolase (467 aa).

Residues Lys74 and Ser149 each act as charge relay system in the active site. Catalysis depends on Ser173, which acts as the Acyl-ester intermediate.

The protein belongs to the amidase family.

Its pathway is plant hormone metabolism; auxin biosynthesis. In terms of biological role, hydrolyzes indole-3-acetamide (IAM) into indole-3-acetic acid (IAA). The polypeptide is Indoleacetamide hydrolase (TA-iaaH) (Agrobacterium vitis (Rhizobium vitis)).